The chain runs to 208 residues: Putative 3-methyladenine DNA glycosylase (208 aa).

The protein belongs to the DNA glycosylase MPG family.

The chain is Putative 3-methyladenine DNA glycosylase from Lactobacillus delbrueckii subsp. bulgaricus (strain ATCC BAA-365 / Lb-18).